The following is a 470-amino-acid chain: Cupincin (470 aa).

An N-terminal signal peptide occupies residues 1-34 (MAKKKTSSSMARSQLAALLISLCFLSLASNAVGW). Positions 36-52 (RRGEREEEDERRRHGGE) are enriched in basic and acidic residues. Disordered regions lie at residues 36–59 (RRGE…PYHL) and 240–261 (KSCS…PSSL). 2 Cupin type-1 domains span residues 57 to 215 (YHLG…EELE) and 259 to 445 (SSLT…AREA). Asparagine 297 is a glycosylation site (N-linked (GlcNAc...) asparagine). Residues 330 to 368 (PHVSGGGSSERREREREHGRRREEEQGEEEHGERGEKAR) form a disordered region. The span at 338 to 367 (SERREREREHGRRREEEQGEEEHGERGEKA) shows a compositional bias: basic and acidic residues. 3 residues coordinate Zn(2+): histidine 347, glutamate 352, and histidine 360.

Belongs to the 7S seed storage protein family. As to quaternary structure, homotrimer. Zn(2+) serves as cofactor.

It localises to the secreted. Its function is as follows. Seed storage protein. Globulin-like protein that acts as a zinc metalloprotease. Cleaves specifically between Leu-15 and Tyr-16 of insulin B chain, and Gln-1 and Leu-2 of neurotensin (NT) peptide in vitro. May play a role as an initiating endopeptidase in germinating seeds. This is Cupincin from Oryza sativa subsp. japonica (Rice).